Reading from the N-terminus, the 225-residue chain is MKESDEKAEKINKYIEMLINYPVNLTAYTTKKDAYENLILDSLIPIEAEDTFLNSKNIVDIGTGGGIPGLVWAIYFPEKEFYLVDSVSKKIEALKIFIKELKITNVYLFCERAEDFAKTHRDYFDFATCKALARSDIALEYLSPLVKVNSYISLFKGPSYYTNEMKYTQNVLKKLNIAEFKEIDYEIGEDKKKRYMILFKKIGITPQNFPRQVGIPKKFPLGEIK.

S-adenosyl-L-methionine-binding positions include Gly-62, 113–114, and Lys-130; that span reads AE.

Belongs to the methyltransferase superfamily. RNA methyltransferase RsmG family.

The protein localises to the cytoplasm. In terms of biological role, specifically methylates the N7 position of a guanine in 16S rRNA. The sequence is that of Ribosomal RNA small subunit methyltransferase G from Petrotoga mobilis (strain DSM 10674 / SJ95).